The primary structure comprises 139 residues: Ribonuclease VapC3 (139 aa).

A PINc domain is found at 14–121 (EAIVLDTGAF…VATDDYTLQR (108 aa)). D19 contributes to the Mg(2+) binding site.

It belongs to the PINc/VapC protein family. Mg(2+) serves as cofactor.

Functionally, toxic component of a type II toxin-antitoxin (TA) system. An RNase. The polypeptide is Ribonuclease VapC3 (Aeropyrum pernix (strain ATCC 700893 / DSM 11879 / JCM 9820 / NBRC 100138 / K1)).